The primary structure comprises 473 residues: Photosystem II CP43 reaction center protein (473 aa).

A propeptide spanning residues Met-1 to Glu-14 is cleaved from the precursor. Thr-15 carries the post-translational modification N-acetylthreonine. Residue Thr-15 is modified to Phosphothreonine. 5 consecutive transmembrane segments (helical) span residues Leu-69–Ala-93, Leu-134–Asn-155, Lys-178–Thr-200, Lys-255–Ser-275, and Trp-291–Ala-312. Residue Glu-367 participates in [CaMn4O5] cluster binding. The chain crosses the membrane as a helical span at residues Arg-447 to Pro-471.

This sequence belongs to the PsbB/PsbC family. PsbC subfamily. As to quaternary structure, PSII is composed of 1 copy each of membrane proteins PsbA, PsbB, PsbC, PsbD, PsbE, PsbF, PsbH, PsbI, PsbJ, PsbK, PsbL, PsbM, PsbT, PsbX, PsbY, PsbZ, Psb30/Ycf12, at least 3 peripheral proteins of the oxygen-evolving complex and a large number of cofactors. It forms dimeric complexes. It depends on Binds multiple chlorophylls and provides some of the ligands for the Ca-4Mn-5O cluster of the oxygen-evolving complex. It may also provide a ligand for a Cl- that is required for oxygen evolution. PSII binds additional chlorophylls, carotenoids and specific lipids. as a cofactor.

The protein localises to the plastid. It is found in the chloroplast thylakoid membrane. Functionally, one of the components of the core complex of photosystem II (PSII). It binds chlorophyll and helps catalyze the primary light-induced photochemical processes of PSII. PSII is a light-driven water:plastoquinone oxidoreductase, using light energy to abstract electrons from H(2)O, generating O(2) and a proton gradient subsequently used for ATP formation. The protein is Photosystem II CP43 reaction center protein of Brachypodium distachyon (Purple false brome).